A 953-amino-acid chain; its full sequence is 26S proteasome non-ATPase regulatory subunit 1 (953 aa).

Residue Met1 is modified to N-acetylmethionine. Thr273 bears the Phosphothreonine mark. The disordered stretch occupies residues 277–319 (SVPGSTNTGTVPGPEKDSDSMETEEKTAGAVAGKTPDASPEPK). The span at 290 to 303 (PEKDSDSMETEEKT) shows a compositional bias: basic and acidic residues. Position 310 is an N6-acetyllysine (Lys310). Thr311 is subject to Phosphothreonine. A Phosphoserine modification is found at Ser315. PC repeat units lie at residues 403–436 (TATA…PGSA), 441–474 (GGLY…DIVR), 476–510 (GGSL…VTGE), 511–545 (AAGL…EKIL), 547–580 (GLAV…ILRR), 581–616 (SGMY…DVRR), 617–649 (AAVE…PHVR), 651–685 (GAAM…YVRQ), 686–726 (GALI…DVMA), and 729–761 (GAIL…PSVV). Residue Lys720 is modified to N6-acetyllysine. Thr830 is subject to Phosphothreonine. A Phosphoserine modification is found at Ser834. 2 disordered regions span residues 839–881 (AKKK…LDNP) and 930–953 (AHGP…YIDD). 2 stretches are compositionally biased toward basic and acidic residues: residues 842–852 (KEKEKEKKEEE) and 859–872 (AEKK…KEPE). Residues 936–953 (EEEEQEPEPPEPFEYIDD) show a composition bias toward acidic residues.

The protein belongs to the proteasome subunit S1 family. In terms of assembly, component of the 19S proteasome regulatory particle complex. The 26S proteasome consists of a 20S core particle (CP) and two 19S regulatory subunits (RP). The regulatory particle is made of a lid composed of 9 subunits, a base containing 6 ATPases and few additional components including PSMD1. Interacts with ADRM1. Interacts with ZFAND1.

Its function is as follows. Component of the 26S proteasome, a multiprotein complex involved in the ATP-dependent degradation of ubiquitinated proteins. This complex plays a key role in the maintenance of protein homeostasis by removing misfolded or damaged proteins, which could impair cellular functions, and by removing proteins whose functions are no longer required. Therefore, the proteasome participates in numerous cellular processes, including cell cycle progression, apoptosis, or DNA damage repair. This Rattus norvegicus (Rat) protein is 26S proteasome non-ATPase regulatory subunit 1 (Psmd1).